The primary structure comprises 204 residues: Peptide deformylase (204 aa).

Fe cation is bound by residues C131 and H174. E175 is a catalytic residue. Fe cation is bound at residue H178.

The protein belongs to the polypeptide deformylase family. Fe(2+) is required as a cofactor.

It catalyses the reaction N-terminal N-formyl-L-methionyl-[peptide] + H2O = N-terminal L-methionyl-[peptide] + formate. Its function is as follows. Removes the formyl group from the N-terminal Met of newly synthesized proteins. Requires at least a dipeptide for an efficient rate of reaction. N-terminal L-methionine is a prerequisite for activity but the enzyme has broad specificity at other positions. The chain is Peptide deformylase from Streptococcus pyogenes serotype M49 (strain NZ131).